We begin with the raw amino-acid sequence, 413 residues long: Multidrug resistance protein MdtM (413 aa).

At 1–14 the chain is on the cytoplasmic side; sequence MQRIIQFFSQRATT. A helical transmembrane segment spans residues 15 to 35; the sequence is LFFPMALILYDFAAYLTTDLI. At 36–51 the chain is on the periplasmic side; it reads QPGIINVVRDFNADVS. Residues 52–72 traverse the membrane as a helical segment; the sequence is LAPASVSLYLAGGMALQWLLG. At 73-81 the chain is on the cytoplasmic side; sequence PLSDRIGRR. Residues 82 to 102 form a helical membrane-spanning segment; that stretch reads PVLIAGALIFTLACAATLLTT. Over 103–106 the chain is Periplasmic; sequence SMTQ. A helical membrane pass occupies residues 107–127; it reads FLVARFVQGTSICFIATVGYV. The Cytoplasmic portion of the chain corresponds to 128 to 140; the sequence is TVQEAFGQTKAIK. A helical membrane pass occupies residues 141–161; sequence LMAIITSIVLVAPVIGPLSGA. Over 162 to 170 the chain is Periplasmic; it reads ALMHFVHWK. The helical transmembrane segment at 171 to 191 threads the bilayer; that stretch reads VLFGIIAVMGLLALCGLLLAM. Residues 192–225 are Cytoplasmic-facing; that stretch reads PETVQRGAVPFSAVSVLRDFRNVFRNPIFLTGAA. A helical membrane pass occupies residues 226 to 246; it reads TLSLSYIPMMSWVAVSPVILI. Topologically, residues 247-254 are periplasmic; it reads DAGGMSTS. Residues 255-275 form a helical membrane-spanning segment; that stretch reads QFAWAQVPVFGAVIVANMIVV. Over 276–289 the chain is Cytoplasmic; that stretch reads RLVKDPTRPRFIWR. Helical transmembrane passes span 290 to 310 and 311 to 331; these read AVPIQLSGLATLLLGNLLLPH and VWLWSVLGTSLYAFGIGMIFP. Over 332–351 the chain is Cytoplasmic; that stretch reads TLFRFTLFSNNLPKGTVSAS. Residues 352–372 form a helical membrane-spanning segment; the sequence is LNMVILTVMAVSVEVGRWLWF. Residues 373 to 376 lie on the Periplasmic side of the membrane; sequence HGGR. Residues 377–397 form a helical membrane-spanning segment; it reads LPFHLLAAVAGVIVVFTLATL. Residues 398–413 are Cytoplasmic-facing; sequence LQRVRQHEAAELAAEK.

This sequence belongs to the major facilitator superfamily.

The protein resides in the cell inner membrane. Proton-dependent efflux pump. Confers resistance to a broad spectrum of chemically unrelated substrates. The polypeptide is Multidrug resistance protein MdtM (mdtM) (Salmonella typhimurium (strain LT2 / SGSC1412 / ATCC 700720)).